Here is a 233-residue protein sequence, read N- to C-terminus: Orotidine 5'-phosphate decarboxylase (233 aa).

Substrate-binding positions include Asp-11, Lys-34, 61 to 70 (DLKLHDIPNT), Thr-117, Arg-179, Gln-189, Gly-209, and Arg-210. Residue Lys-63 is the Proton donor of the active site.

Belongs to the OMP decarboxylase family. Type 1 subfamily. In terms of assembly, homodimer.

It carries out the reaction orotidine 5'-phosphate + H(+) = UMP + CO2. It participates in pyrimidine metabolism; UMP biosynthesis via de novo pathway; UMP from orotate: step 2/2. Catalyzes the decarboxylation of orotidine 5'-monophosphate (OMP) to uridine 5'-monophosphate (UMP). The sequence is that of Orotidine 5'-phosphate decarboxylase from Streptococcus agalactiae serotype V (strain ATCC BAA-611 / 2603 V/R).